The chain runs to 353 residues: Tetraacyldisaccharide 4'-kinase (353 aa).

66–73 (TVGGTGKT) contributes to the ATP binding site.

The protein belongs to the LpxK family.

The enzyme catalyses a lipid A disaccharide + ATP = a lipid IVA + ADP + H(+). It participates in glycolipid biosynthesis; lipid IV(A) biosynthesis; lipid IV(A) from (3R)-3-hydroxytetradecanoyl-[acyl-carrier-protein] and UDP-N-acetyl-alpha-D-glucosamine: step 6/6. In terms of biological role, transfers the gamma-phosphate of ATP to the 4'-position of a tetraacyldisaccharide 1-phosphate intermediate (termed DS-1-P) to form tetraacyldisaccharide 1,4'-bis-phosphate (lipid IVA). This Geobacter sulfurreducens (strain ATCC 51573 / DSM 12127 / PCA) protein is Tetraacyldisaccharide 4'-kinase.